The sequence spans 151 residues: Small ribosomal subunit protein uS19 (151 aa).

The protein belongs to the universal ribosomal protein uS19 family.

This Picea mariana (Black spruce) protein is Small ribosomal subunit protein uS19 (RPS15).